We begin with the raw amino-acid sequence, 373 residues long: Chaperone protein DnaJ (373 aa).

A J domain is found at 4–69 (SYYEILEITQ…EKRAIYDRYG (66 aa)). The segment at 135 to 212 (GCKKNIDFTY…CKGLGYNESK (78 aa)) adopts a CR-type zinc-finger fold. Zn(2+)-binding residues include Cys148, Cys151, Cys164, Cys167, Cys186, Cys189, Cys200, and Cys203. CXXCXGXG motif repeat units lie at residues 148–155 (CKTCNGTG), 164–171 (CPKCQGRG), 186–193 (CPDCQGIG), and 200–207 (CSDCKGLG).

The protein belongs to the DnaJ family. In terms of assembly, homodimer. Zn(2+) serves as cofactor.

Its subcellular location is the cytoplasm. Participates actively in the response to hyperosmotic and heat shock by preventing the aggregation of stress-denatured proteins and by disaggregating proteins, also in an autonomous, DnaK-independent fashion. Unfolded proteins bind initially to DnaJ; upon interaction with the DnaJ-bound protein, DnaK hydrolyzes its bound ATP, resulting in the formation of a stable complex. GrpE releases ADP from DnaK; ATP binding to DnaK triggers the release of the substrate protein, thus completing the reaction cycle. Several rounds of ATP-dependent interactions between DnaJ, DnaK and GrpE are required for fully efficient folding. Also involved, together with DnaK and GrpE, in the DNA replication of plasmids through activation of initiation proteins. The polypeptide is Chaperone protein DnaJ (Campylobacter jejuni subsp. jejuni serotype O:2 (strain ATCC 700819 / NCTC 11168)).